The primary structure comprises 183 residues: Ribulose bisphosphate carboxylase small subunit, chloroplastic (183 aa).

The N-terminal 59 residues, 1–59 (MASSMISSGTVATVSADRPAPAQARMVAPFNGLKSSSAFPVTRKSNDITSIASNGGRVQ), are a transit peptide targeting the chloroplast.

This sequence belongs to the RuBisCO small chain family. As to quaternary structure, heterohexadecamer of 8 large and 8 small subunits.

The protein localises to the plastid. It localises to the chloroplast. Its function is as follows. RuBisCO catalyzes two reactions: the carboxylation of D-ribulose 1,5-bisphosphate, the primary event in carbon dioxide fixation, as well as the oxidative fragmentation of the pentose substrate. Both reactions occur simultaneously and in competition at the same active site. Although the small subunit is not catalytic it is essential for maximal activity. The chain is Ribulose bisphosphate carboxylase small subunit, chloroplastic from Pyrus pyrifolia (Chinese pear).